We begin with the raw amino-acid sequence, 268 residues long: Large ribosomal subunit protein bL9m (268 aa).

The N-terminal 52 residues, 1–52 (MAAAAFAVPRGVQLRVLTERLLRGGVRELLRPRLSGSTPGSERDFSLSHSRG), are a transit peptide targeting the mitochondrion.

Belongs to the bacterial ribosomal protein bL9 family. As to quaternary structure, component of the mitochondrial ribosome large subunit (39S) which comprises a 16S rRNA and about 50 distinct proteins.

It localises to the mitochondrion. The protein is Large ribosomal subunit protein bL9m (MRPL9) of Bos taurus (Bovine).